The sequence spans 393 residues: Mitogen-activated protein kinase 10 (393 aa).

The Protein kinase domain maps to 60–345 (KPPIRPIGRG…VKEALAHPYL (286 aa)). ATP-binding positions include 66–74 (IGRGACGIV) and lysine 89. Aspartate 186 acts as the Proton acceptor in catalysis. Threonine 218 carries the post-translational modification Phosphothreonine. Residues 218-220 (TEY) carry the TXY motif. Phosphotyrosine is present on tyrosine 220. Threonine 223 carries the post-translational modification Phosphothreonine.

This sequence belongs to the protein kinase superfamily. CMGC Ser/Thr protein kinase family. MAP kinase subfamily. In terms of assembly, interacts with MKK2. Dually phosphorylated on Thr-218 and Tyr-220, which activates the enzyme.

It catalyses the reaction L-seryl-[protein] + ATP = O-phospho-L-seryl-[protein] + ADP + H(+). The catalysed reaction is L-threonyl-[protein] + ATP = O-phospho-L-threonyl-[protein] + ADP + H(+). With respect to regulation, activated by threonine and tyrosine phosphorylation. This is Mitogen-activated protein kinase 10 (MPK10) from Arabidopsis thaliana (Mouse-ear cress).